A 306-amino-acid chain; its full sequence is Ribosomal RNA small subunit methyltransferase H (306 aa).

Residues 33 to 35 (GGY), aspartate 51, phenylalanine 78, aspartate 96, and glutamine 103 contribute to the S-adenosyl-L-methionine site.

Belongs to the methyltransferase superfamily. RsmH family.

The protein resides in the cytoplasm. The enzyme catalyses cytidine(1402) in 16S rRNA + S-adenosyl-L-methionine = N(4)-methylcytidine(1402) in 16S rRNA + S-adenosyl-L-homocysteine + H(+). Its function is as follows. Specifically methylates the N4 position of cytidine in position 1402 (C1402) of 16S rRNA. The polypeptide is Ribosomal RNA small subunit methyltransferase H (Rickettsia prowazekii (strain Madrid E)).